The chain runs to 751 residues: Putative tyrosine-protein kinase EpsB (751 aa).

Topologically, residues 1 to 31 (MTQNLSQPPAVNAPESELDLVRYLDVLVANR) are cytoplasmic. Residues 32 to 52 (WLIAGIAAVVMLLGATYAFLA) form a helical membrane-spanning segment. Topologically, residues 53 to 444 (RPVYEADVLV…VPEEPVKPKK (392 aa)) are periplasmic. Residues 445 to 465 (LTVTALAGVLGVVLGVVAAFV) form a helical membrane-spanning segment. The Cytoplasmic portion of the chain corresponds to 466–751 (RNTLFGGITE…PSAEAEAESA (286 aa)).

This sequence belongs to the etk/wzc family.

The protein resides in the cell inner membrane. It carries out the reaction L-tyrosyl-[protein] + ATP = O-phospho-L-tyrosyl-[protein] + ADP + H(+). Functionally, probably involved in polymerization and/or export of exopolysaccharide EPS I which functions as a virulence factor. May be involved in an ATP-dependent process in the pathway for EPS I production, possibly export of the trimeric repeat units across the inner membrane or their polymerization. The polypeptide is Putative tyrosine-protein kinase EpsB (epsB) (Ralstonia nicotianae (strain ATCC BAA-1114 / GMI1000) (Ralstonia solanacearum)).